A 49-amino-acid chain; its full sequence is Chitin-binding lectin (49 aa).

Residues 2–45 (DHRCGREATPPGKLCNDGRCCSQWGWCGTTQAYCSGKCQSQCDC) form the Chitin-binding type-1 domain. Disulfide bonds link Cys-5-Cys-22, Cys-16-Cys-28, Cys-21-Cys-35, and Cys-39-Cys-43.

Homodimer; disulfide-linked.

Chitin-binding lectin which is specific for N-acetylglucosamine oligomers. The polypeptide is Chitin-binding lectin (Viscum album (European mistletoe)).